A 376-amino-acid chain; its full sequence is Flagellar P-ring protein (376 aa).

An N-terminal signal peptide occupies residues 1–29 (MTQRPFSLLSHLGRICLAAAMLAALPAQA).

Belongs to the FlgI family. As to quaternary structure, the basal body constitutes a major portion of the flagellar organelle and consists of four rings (L,P,S, and M) mounted on a central rod.

The protein resides in the periplasm. It is found in the bacterial flagellum basal body. Functionally, assembles around the rod to form the L-ring and probably protects the motor/basal body from shearing forces during rotation. This is Flagellar P-ring protein from Bordetella avium (strain 197N).